A 380-amino-acid polypeptide reads, in one-letter code: MDEHFIKIHKWLYPVSWIYGAVVTVRNKLFDWGFLRSKSFGVPVICIGNLSVGGTGKTPHTEYLIKLLRDNYHVAVLSRGYKRHSRGYVLATPQSTARSIGDEPYQMHTKFPSVTLAVDENRCHGIEQLLSIKEPSIEVVLLDDAFQHRYVKPGLSILLTDYHRLFCDDTLLPAGRLRESVNGKNRAQIVIVTKCPQDIKPIDYNIITKRLNLYPYQQLYFSSFRYGNLQPVFPSANSEIDSTVNELPLSALTNTDILLVTGIASPAPILEELKMYTDQIDSLSFDDHHHFSHRDIQQIKERFGKLKGEHKLIVTTEKDATRLIHHPVLSEELKPFIYALPIEIEILQNQQDKFNQHIIGYVRENTRNSSFSERENAHQS.

ATP is bound at residue 51-58 (SVGGTGKT).

Belongs to the LpxK family.

The enzyme catalyses a lipid A disaccharide + ATP = a lipid IVA + ADP + H(+). The protein operates within glycolipid biosynthesis; lipid IV(A) biosynthesis; lipid IV(A) from (3R)-3-hydroxytetradecanoyl-[acyl-carrier-protein] and UDP-N-acetyl-alpha-D-glucosamine: step 6/6. In terms of biological role, transfers the gamma-phosphate of ATP to the 4'-position of a tetraacyldisaccharide 1-phosphate intermediate (termed DS-1-P) to form tetraacyldisaccharide 1,4'-bis-phosphate (lipid IVA). In Bacteroides thetaiotaomicron (strain ATCC 29148 / DSM 2079 / JCM 5827 / CCUG 10774 / NCTC 10582 / VPI-5482 / E50), this protein is Tetraacyldisaccharide 4'-kinase.